A 241-amino-acid chain; its full sequence is Purine nucleoside phosphorylase DeoD-type (241 aa).

An a purine D-ribonucleoside-binding site is contributed by histidine 5. Phosphate contacts are provided by residues glycine 21, arginine 25, arginine 44, and 88–91 (RVGS). Residues 180–182 (EME) and 204–205 (SD) each bind a purine D-ribonucleoside. The active-site Proton donor is aspartate 205.

Belongs to the PNP/UDP phosphorylase family. As to quaternary structure, homohexamer; trimer of homodimers.

It carries out the reaction a purine D-ribonucleoside + phosphate = a purine nucleobase + alpha-D-ribose 1-phosphate. It catalyses the reaction a purine 2'-deoxy-D-ribonucleoside + phosphate = a purine nucleobase + 2-deoxy-alpha-D-ribose 1-phosphate. In terms of biological role, catalyzes the reversible phosphorolytic breakdown of the N-glycosidic bond in the beta-(deoxy)ribonucleoside molecules, with the formation of the corresponding free purine bases and pentose-1-phosphate. The polypeptide is Purine nucleoside phosphorylase DeoD-type (Yersinia enterocolitica serotype O:8 / biotype 1B (strain NCTC 13174 / 8081)).